Reading from the N-terminus, the 285-residue chain is Vacuolar protein sorting-associated protein 37B (285 aa).

Positions 50–170 (ASNRSLAEGN…ELVLKGQRHP (121 aa)) are interaction with IST1. Residues 84 to 173 (FEAYQIKKTK…LKGQRHPQAG (90 aa)) enclose the VPS37 C-terminal domain. Disordered regions lie at residues 167–215 (QRHP…PPVP) and 242–285 (PLPP…FILQ). Pro residues-rich tracts occupy residues 173 to 184 (GAPPPPRVPEPS) and 206 to 215 (RIPPPPPPVP). Residues 250–259 (PSQQGFSAQL) show a composition bias toward polar residues. Residues 262–275 (PYPPALPQRPPPRM) show a composition bias toward pro residues. Residues 276–285 (APHQPGFILQ) are compositionally biased toward low complexity.

Belongs to the VPS37 family. In terms of assembly, component of the ESCRT-I complex (endosomal sorting complex required for transport I) which consists of TSG101, VPS28, a VPS37 protein (VPS37A to -D) and MVB12A or MVB12B in a 1:1:1:1 stoichiometry. Interacts with TSG101, VPS28, MVB12A and MVB12B. Component of the ESCRT-I complex (endosomal sorting complex required for transport I) which consists of TSG101, VPS28, a VPS37 protein (VPS37A to -D) and UBAP1 in a 1:1:1:1 stoichiometry. Interacts with CEP55. Interacts with IST1.

Its subcellular location is the late endosome membrane. Functionally, component of the ESCRT-I complex, a regulator of vesicular trafficking process. Required for the sorting of endocytic ubiquitinated cargos into multivesicular bodies. May be involved in cell growth and differentiation. The sequence is that of Vacuolar protein sorting-associated protein 37B (Vps37b) from Mus musculus (Mouse).